Consider the following 394-residue polypeptide: MAKAKFERTKPHVNIGTIGHVDHGKTTLTAAISTVLAKKGQAIAQSYADVDKTPEERERGITINASHVEYETKTRHYAHVDCPGHADYVKNMITGAAQMDGAILVIAASDGVMAQTKEHILLARQVGVPKIVVFLNKCDFMTDPDMQDLVEMEVRELLTKYGFDGDNTPVIRGSGLKALEGDPVWEAKIDELMDAVDSWIPLPERSTDKPFLLAIEDVFTISGRGTVVTGRVERGTLKVNDEVEIVGLKDTQKTVVTGIEMFRKSLDQAEAGDNAGILLRGIKKEDVERGQVLVKPGSIKPHRTFTAKVYILKKEEGGRHTPIVSGYRPQFYFRTTDVTGAISLPAGVDLVMPGDDVEMTVELIAPVAIEDGSKFSIREGGKTVGHGSVIKTSN.

The 195-residue stretch at 10 to 204 (KPHVNIGTIG…AVDSWIPLPE (195 aa)) folds into the tr-type G domain. A G1 region spans residues 19-26 (GHVDHGKT). Residue 19 to 26 (GHVDHGKT) coordinates GTP. Thr-26 contributes to the Mg(2+) binding site. Residues 60 to 64 (GITIN) form a G2 region. The interval 81–84 (DCPG) is G3. Residues 81 to 85 (DCPGH) and 136 to 139 (NKCD) contribute to the GTP site. The tract at residues 136 to 139 (NKCD) is G4. The tract at residues 174–176 (SGL) is G5.

This sequence belongs to the TRAFAC class translation factor GTPase superfamily. Classic translation factor GTPase family. EF-Tu/EF-1A subfamily. In terms of assembly, monomer.

The protein resides in the cytoplasm. The catalysed reaction is GTP + H2O = GDP + phosphate + H(+). Functionally, GTP hydrolase that promotes the GTP-dependent binding of aminoacyl-tRNA to the A-site of ribosomes during protein biosynthesis. This Ureaplasma urealyticum serovar 10 (strain ATCC 33699 / Western) protein is Elongation factor Tu.